A 224-amino-acid chain; its full sequence is MRLTWLGHACFSLAGSRTIVIDPFIPEGSLPAEPDIVAVTHAHADHLGIATELSKKTVAVNEVAKYLKTKGVPAEPMNLGGTITVDGVRFTMTPALHSSWLEDEGPGFYGGVAAGFVITMDGVSVYHAGDTALFSDMQLIRDLYRPDVALLPVGGCFTMGPEEAMIAARYIGAPLVVPMHYDTFPAIRQNLEEFKRTIERTTSIRVALLSPGESIEVGPEKAGE.

Belongs to the UPF0173 family.

The protein is UPF0173 metal-dependent hydrolase Memar_1421 of Methanoculleus marisnigri (strain ATCC 35101 / DSM 1498 / JR1).